Here is a 272-residue protein sequence, read N- to C-terminus: PILR alpha-associated neural protein (272 aa).

An N-terminal signal peptide occupies residues 1–27; it reads MWPAQLLSQLLPLWPLLLLPLSLPAQG. Positions 25-93 are disordered; sequence AQGSSHRSPP…PSGFEEGPPS (69 aa). Residues 28–174 are Extracellular-facing; that stretch reads SSHRSPPAPA…FGGRGEGVDP (147 aa). A glycan (O-linked (GalNAc...) threonine) is linked at Thr136. Residues 175–195 form a helical membrane-spanning segment; that stretch reads QLYVTITISIIIVLVATGIIF. Residues 196–272 lie on the Cytoplasmic side of the membrane; sequence KFCWDRSQKR…KGAPAFQLNR (77 aa). Residues 205 to 272 form a disordered region; the sequence is RRRPSGQQGA…KGAPAFQLNR (68 aa). Over residues 209–225 the composition is skewed to polar residues; it reads SGQQGALRQEESQQPLT.

Post-translationally, O-glycosylation at Thr-136 is essential for recognition by PILRA.

It is found in the membrane. Functionally, acts as a ligand for PILRA in neuronal tissues, where it may be involved in immune regulation. The sequence is that of PILR alpha-associated neural protein (Pianp) from Rattus norvegicus (Rat).